A 305-amino-acid polypeptide reads, in one-letter code: MARTDDDSWDLASSVGATATMVAAQRALASHVPNPLINDPYAEPLVRAVGIEYFTKLASGAFDPEQMAGLVQLGITADGMANGMASRTWYYDTAFESSTAAGVRQAVILASGLDTRAYRLTWPAGTTVYELDQPEVITFKTDTLAELGASPSAERRTVAIDLREDWPAALQAAGFDPEQPTVWSAEGLLIYLPPEAQDRLFASITELSAPGSRLVCEQVPGLETADFSKARELTRQFAGETLDLDLESLVYTQERQMAADWLAEHGWTVITEENDELYARLNLDPPNPLLRSIFPNIVYVDATLG.

Residues aspartate 132 and 161–162 (DL) each bind S-adenosyl-L-methionine.

It belongs to the UPF0677 family.

Functionally, exhibits S-adenosyl-L-methionine-dependent methyltransferase activity. This is Putative S-adenosyl-L-methionine-dependent methyltransferase MAB_3787 from Mycobacteroides abscessus (strain ATCC 19977 / DSM 44196 / CCUG 20993 / CIP 104536 / JCM 13569 / NCTC 13031 / TMC 1543 / L948) (Mycobacterium abscessus).